A 246-amino-acid polypeptide reads, in one-letter code: PARP-type zinc finger-containing protein C2A9.07c (246 aa).

Residues 8–99 (YRVELAKTGR…EKILRAFEQG (92 aa)) form a PARP-type; degenerate zinc finger. A compositionally biased stretch (basic and acidic residues) spans 103–126 (EEDEERCRKMASDASEEKDRKIEE). The interval 103–246 (EEDEERCRKM…ESGNEYSDSD (144 aa)) is disordered. The residue at position 130 (Thr-130) is a Phosphothreonine. Ser-131 carries the post-translational modification Phosphoserine. The span at 157 to 168 (NKKHKAERKRSP) shows a compositional bias: basic residues. Positions 175–184 (LEDDEEIEDV) are enriched in acidic residues. Basic and acidic residues predominate over residues 185-196 (ASDKDEEEKPWS). Positions 197–215 (GDEEDDDELVVKDSEDETE) are enriched in acidic residues. 2 positions are modified to phosphoserine: Ser-243 and Ser-245.

Its subcellular location is the nucleus. It is found in the mitochondrion. The polypeptide is PARP-type zinc finger-containing protein C2A9.07c (Schizosaccharomyces pombe (strain 972 / ATCC 24843) (Fission yeast)).